Consider the following 314-residue polypeptide: Acetaldehyde dehydrogenase 1 (314 aa).

Position 11-14 (Ser-11–Ile-14) interacts with NAD(+). The Acyl-thioester intermediate role is filled by Cys-129. NAD(+)-binding positions include Ser-160–Asn-168 and Asn-292.

It belongs to the acetaldehyde dehydrogenase family.

It catalyses the reaction acetaldehyde + NAD(+) + CoA = acetyl-CoA + NADH + H(+). This Nocardioides sp. (strain ATCC BAA-499 / JS614) protein is Acetaldehyde dehydrogenase 1.